A 794-amino-acid chain; its full sequence is Protein sel-1 homolog 1 (794 aa).

Residues 1–21 (MQVRVRLLLLLCAVLLGSAAA) form the signal peptide. An interaction with ERLEC1, OS9 and SYVN1 region spans residues 22-737 (SSDEETNQDE…DLFTQLDMDQ (716 aa)). Over 22–738 (SSDEETNQDE…LFTQLDMDQL (717 aa)) the chain is Lumenal. A compositionally biased stretch (acidic residues) spans 23 to 32 (SDEETNQDES). Disordered regions lie at residues 23–46 (SDEE…GSVK) and 73–105 (QDEE…KTYE). The 49-residue stretch at 122 to 170 (AHGEPCHFPFLFLDKEYDECTSDGREDGRLWCATTYDYKTDEKWGFCET) folds into the Fibronectin type-II domain. Cystine bridges form between Cys-127/Cys-153 and Cys-141/Cys-168. 9 Sel1-like repeats span residues 183 to 218 (AEAI…GMNH), 219 to 254 (TKAL…EEGS), 255 to 290 (PKGQ…LGGN), 291 to 326 (LIAH…NHVA), 373 to 409 (VQAQ…NAGN), 410 to 446 (SHAM…DMGN), 447 to 482 (PVGQ…EQGW), 483 to 518 (VDGQ…QGGH), and 519 to 554 (ILAF…ERGR). 2 N-linked (GlcNAc...) asparagine glycosylation sites follow: Asn-195 and Asn-217. A glycan (N-linked (GlcNAc...) asparagine) is linked at Asn-272. The important for homodimerization and oligomerization stretch occupies residues 352-537 (NSGMLEEDLI…MHASGTGVMR (186 aa)). Asn-431 carries an N-linked (GlcNAc...) asparagine glycan. The N-linked (GlcNAc...) asparagine glycan is linked to Asn-608. Sel1-like repeat units follow at residues 627–662 (TVAR…EQQH) and 664–699 (AQAM…EASP). An interaction with SYVN1 region spans residues 643–723 (TDVDYETAFI…VVYFLQYIRE (81 aa)). The interval 738 to 794 (LLGPEWDLYLMTIIALLLGTVIAYRQRQHQDIPVPRPPGPRPAPPQQEGPPEQQPPQ) is mediates retention in the endoplasmic reticulum. Residues 739 to 759 (LGPEWDLYLMTIIALLLGTVI) form a helical membrane-spanning segment. Topologically, residues 760-794 (AYRQRQHQDIPVPRPPGPRPAPPQQEGPPEQQPPQ) are cytoplasmic. Residues 767–794 (QDIPVPRPPGPRPAPPQQEGPPEQQPPQ) are disordered. Positions 771 to 794 (VPRPPGPRPAPPQQEGPPEQQPPQ) are enriched in pro residues.

This sequence belongs to the sel-1 family. As to quaternary structure, homodimer and homooligomer. May form a complex with ERLEC1, HSPA5, OS9, and SYVN1. Interacts with FOXRED2 and EDEM1. Interacts with LPL and LMF1; may stabilize the complex formed by LPL and LMF1 and thereby promote the export of LPL dimers. Component of the HRD1 complex, which comprises at least SYNV1/HRD1, DERL1/2, FAM8A1, HERPUD1/HERP, OS9, SEL1L and UBE2J1. SYNV1 assembles with SEL1L and FAM8A1 through its transmembrane domains, but interaction with its cytoplasmic domain is required to confer stability to FAM8A1 and enhance recruitment of HERPUD1. The interaction with SYNV1/HRD1 is direct. In terms of processing, N-glycosylated.

It is found in the endoplasmic reticulum membrane. Its function is as follows. Plays a role in the endoplasmic reticulum quality control (ERQC) system also called ER-associated degradation (ERAD) involved in ubiquitin-dependent degradation of misfolded endoplasmic reticulum proteins. Enhances SYVN1 stability. Plays a role in LPL maturation and secretion. Required for normal differentiation of the pancreas epithelium, and for normal exocrine function and survival of pancreatic cells. May play a role in Notch signaling. In Rattus norvegicus (Rat), this protein is Protein sel-1 homolog 1 (Sel1l).